A 357-amino-acid polypeptide reads, in one-letter code: Peptide chain release factor 1 (357 aa).

Residue Q236 is modified to N5-methylglutamine.

The protein belongs to the prokaryotic/mitochondrial release factor family. In terms of processing, methylated by PrmC. Methylation increases the termination efficiency of RF1.

Its subcellular location is the cytoplasm. Peptide chain release factor 1 directs the termination of translation in response to the peptide chain termination codons UAG and UAA. In Mycolicibacterium gilvum (strain PYR-GCK) (Mycobacterium gilvum (strain PYR-GCK)), this protein is Peptide chain release factor 1.